A 554-amino-acid polypeptide reads, in one-letter code: CTP synthase (554 aa).

The tract at residues 1–270 (MTKFVFVTGG…DGLICDKLRL (270 aa)) is amidoligase domain. Ser-13 serves as a coordination point for CTP. A UTP-binding site is contributed by Ser-13. ATP-binding positions include 14-19 (SLGKGI) and Asp-71. Residues Asp-71 and Glu-144 each coordinate Mg(2+). Residues 151–153 (DIE), 191–196 (KTKPTQ), and Lys-227 each bind CTP. UTP contacts are provided by residues 191 to 196 (KTKPTQ) and Lys-227. The 254-residue stretch at 295–548 (TVAMVGKYVD…IAAAKARHQA (254 aa)) folds into the Glutamine amidotransferase type-1 domain. L-glutamine is bound at residue Gly-357. The active-site Nucleophile; for glutamine hydrolysis is Cys-384. L-glutamine contacts are provided by residues 385–388 (LGMQ), Glu-408, and Arg-474. Residues His-521 and Glu-523 contribute to the active site.

The protein belongs to the CTP synthase family. As to quaternary structure, homotetramer.

The catalysed reaction is UTP + L-glutamine + ATP + H2O = CTP + L-glutamate + ADP + phosphate + 2 H(+). It catalyses the reaction L-glutamine + H2O = L-glutamate + NH4(+). It carries out the reaction UTP + NH4(+) + ATP = CTP + ADP + phosphate + 2 H(+). The protein operates within pyrimidine metabolism; CTP biosynthesis via de novo pathway; CTP from UDP: step 2/2. With respect to regulation, allosterically activated by GTP, when glutamine is the substrate; GTP has no effect on the reaction when ammonia is the substrate. The allosteric effector GTP functions by stabilizing the protein conformation that binds the tetrahedral intermediate(s) formed during glutamine hydrolysis. Inhibited by the product CTP, via allosteric rather than competitive inhibition. Functionally, catalyzes the ATP-dependent amination of UTP to CTP with either L-glutamine or ammonia as the source of nitrogen. Regulates intracellular CTP levels through interactions with the four ribonucleotide triphosphates. The chain is CTP synthase from Verminephrobacter eiseniae (strain EF01-2).